The sequence spans 443 residues: Spermidine hydroxycinnamoyltransferase 1 (443 aa).

Residues His-167 and Asp-390 each act as proton acceptor in the active site.

Belongs to the plant acyltransferase family.

In terms of biological role, hydroxycinnamoyl transferase that catalyzes the transfer of an acyl from p-coumaryol-CoA to spermidine, to produce coumaroyl spermidine. Can use feruloyl-CoA as acyl donor. Contributes to the natural variation of spermidine-based phenolamides in rice cultivars. The sequence is that of Spermidine hydroxycinnamoyltransferase 1 from Oryza sativa subsp. japonica (Rice).